The chain runs to 97 residues: Insertion element IS2 uncharacterized 11.1 kDa protein (97 aa).

The sequence is that of Insertion element IS2 uncharacterized 11.1 kDa protein from Escherichia coli.